The chain runs to 444 residues: Tol-Pal system protein TolB (444 aa).

The signal sequence occupies residues 1–19 (MRNIIYFILSLLFSFASYA).

Belongs to the TolB family. In terms of assembly, the Tol-Pal system is composed of five core proteins: the inner membrane proteins TolA, TolQ and TolR, the periplasmic protein TolB and the outer membrane protein Pal. They form a network linking the inner and outer membranes and the peptidoglycan layer.

Its subcellular location is the periplasm. In terms of biological role, part of the Tol-Pal system, which plays a role in outer membrane invagination during cell division and is important for maintaining outer membrane integrity. The polypeptide is Tol-Pal system protein TolB (Rickettsia massiliae (strain Mtu5)).